The primary structure comprises 60 residues: Large ribosomal subunit protein bL32 (60 aa).

It belongs to the bacterial ribosomal protein bL32 family.

This Moorella thermoacetica (strain ATCC 39073 / JCM 9320) protein is Large ribosomal subunit protein bL32.